The sequence spans 225 residues: Putative O-phosphotransferase MT2714 (225 aa).

30 to 37 (GGSSAGKT) provides a ligand contact to ATP.

To S.violaceus chloramphenicol 3-O phosphotransferase.

This is Putative O-phosphotransferase MT2714 from Mycobacterium tuberculosis (strain CDC 1551 / Oshkosh).